Reading from the N-terminus, the 251-residue chain is Pyrroline-5-carboxylate reductase (251 aa).

The protein belongs to the pyrroline-5-carboxylate reductase family.

The protein resides in the cytoplasm. It carries out the reaction L-proline + NADP(+) = (S)-1-pyrroline-5-carboxylate + NADPH + 2 H(+). It catalyses the reaction L-proline + NAD(+) = (S)-1-pyrroline-5-carboxylate + NADH + 2 H(+). It participates in amino-acid biosynthesis; L-proline biosynthesis; L-proline from L-glutamate 5-semialdehyde: step 1/1. Its function is as follows. Catalyzes the reduction of 1-pyrroline-5-carboxylate (PCA) to L-proline. In Methanobrevibacter smithii, this protein is Pyrroline-5-carboxylate reductase (proC).